Reading from the N-terminus, the 520-residue chain is Alpha-1B adrenergic receptor (520 aa).

Residues 1 to 45 (MNPDLDTGHNTSAPAHWGELKNANFTGPNQTSSNSTLPQLDITRA) are Extracellular-facing. N-linked (GlcNAc...) asparagine glycosylation is found at Asn-10, Asn-24, Asn-29, and Asn-34. The helical transmembrane segment at 46-70 (ISVGLVLGAFILFAIVGNILVILSV) threads the bilayer. The Cytoplasmic portion of the chain corresponds to 71–83 (ACNRHLRTPTNYF). Residues 84–105 (IVNLAMADLLLSFTVLPFSAAL) traverse the membrane as a helical segment. Residues 106–115 (EVLGYWVLGR) lie on the Extracellular side of the membrane. A helical membrane pass occupies residues 116–141 (IFCDIWAAVDVLCCTASILSLCAISI). Cys-118 and Cys-195 form a disulfide bridge. The Cytoplasmic segment spans residues 142–161 (DRYIGVRYSLQYPTLVTRRK). A helical membrane pass occupies residues 162-184 (AILALLSVWVLSTVISIGPLLGW). The Extracellular segment spans residues 185 to 201 (KEPAPNDDKECGVTEEP). A helical transmembrane segment spans residues 202 to 224 (FYALFSSLGSFYIPLAVILVMYC). Residues 225–295 (RVYIVAKRTT…FSREKKAAKT (71 aa)) are Cytoplasmic-facing. Position 264 is a phosphothreonine (Thr-264). The helical transmembrane segment at 296 to 319 (LGIVVGMFILCWLPFFIALPLGSL) threads the bilayer. The Extracellular segment spans residues 320–326 (FSTLKPP). A helical membrane pass occupies residues 327-351 (DAVFKVVFWLGYFNSCLNPIIYPCS). Residues 352–520 (SKEFKRAFVR…SNMPLAPGQF (169 aa)) lie on the Cytoplasmic side of the membrane. Cys-365 carries S-palmitoyl cysteine lipidation. The Nuclear localization signal motif lies at 368–380 (RGRGRRRRRRRRR). Disordered stretches follow at residues 394–432 (GGSL…GYLG) and 479–520 (LTEP…PGQF).

This sequence belongs to the G-protein coupled receptor 1 family. Adrenergic receptor subfamily. ADRA1B sub-subfamily. In terms of assembly, homo- and heterooligomer. Heterooligomerizes with ADRA1B homooligomers in cardiac myocytes. Interacts with CAVIN4.

It is found in the nucleus membrane. The protein resides in the cell membrane. Its subcellular location is the cytoplasm. It localises to the membrane. The protein localises to the caveola. Its function is as follows. This alpha-adrenergic receptor mediates its action by association with G proteins that activate a phosphatidylinositol-calcium second messenger system. Its effect is mediated by G(q) and G(11) proteins. Nuclear ADRA1A-ADRA1B heterooligomers regulate phenylephrine (PE)-stimulated ERK signaling in cardiac myocytes. This is Alpha-1B adrenergic receptor (ADRA1B) from Homo sapiens (Human).